Consider the following 85-residue polypeptide: Beta-insect depressant toxin Lqh-dprIT3a (85 aa).

An N-terminal signal peptide occupies residues 1-21 (MKLLLLLTISASMLIEGLVNA). Residues 22–82 (DGYIRGGDGC…EWDYETNTCG (61 aa)) form the LCN-type CS-alpha/beta domain. 4 disulfides stabilise this stretch: cysteine 31/cysteine 81, cysteine 35/cysteine 56, cysteine 42/cysteine 63, and cysteine 46/cysteine 65. At glycine 82 the chain carries Glycine amide.

Belongs to the long (4 C-C) scorpion toxin superfamily. Sodium channel inhibitor family. Beta subfamily. In terms of tissue distribution, expressed by the venom gland.

The protein resides in the secreted. Functionally, depressant insect beta-toxins cause a transient contraction paralysis followed by a slow flaccid paralysis. They bind voltage-independently at site-4 of sodium channels (Nav) and block action potentials, primarily by depolarizing the axonal membrane and suppressing the sodium current. This depressant toxin is active only on insects. It is found in a relatively small amount in the venom, and its activity on insects is 10-fold higher compared to other known depressant toxins. This chain is Beta-insect depressant toxin Lqh-dprIT3a, found in Leiurus hebraeus (Hebrew deathstalker scorpion).